The primary structure comprises 614 residues: 1-deoxy-D-xylulose-5-phosphate synthase (614 aa).

Thiamine diphosphate contacts are provided by residues His74 and 115 to 117; that span reads AHS. Residue Asp146 participates in Mg(2+) binding. Residues 147 to 148, Asn175, Tyr282, and Glu363 contribute to the thiamine diphosphate site; that span reads GA. Residue Asn175 participates in Mg(2+) binding.

The protein belongs to the transketolase family. DXPS subfamily. In terms of assembly, homodimer. Mg(2+) is required as a cofactor. Requires thiamine diphosphate as cofactor.

It carries out the reaction D-glyceraldehyde 3-phosphate + pyruvate + H(+) = 1-deoxy-D-xylulose 5-phosphate + CO2. It functions in the pathway metabolic intermediate biosynthesis; 1-deoxy-D-xylulose 5-phosphate biosynthesis; 1-deoxy-D-xylulose 5-phosphate from D-glyceraldehyde 3-phosphate and pyruvate: step 1/1. Catalyzes the acyloin condensation reaction between C atoms 2 and 3 of pyruvate and glyceraldehyde 3-phosphate to yield 1-deoxy-D-xylulose-5-phosphate (DXP). The polypeptide is 1-deoxy-D-xylulose-5-phosphate synthase (Nitrosomonas europaea (strain ATCC 19718 / CIP 103999 / KCTC 2705 / NBRC 14298)).